Here is an 830-residue protein sequence, read N- to C-terminus: MGWLCPGLTFSVSCLILVWAAGSGVTCVSPGGVRVLEWPICLSDYVSTSTCEWRMAGPVNCSAEFRLSYQLKFFNTENHTTCVPENRAGSVCVCHMLMESIVIVDTYQLDLWAGEQLLWNSSFKPSQNVKPLAPRNLMVHANISHTWLLTWSNPYPSESYLYSELTYLVNISNENDPTDFRIYNVTYLGPTLRFPANTLKSGAAYSARVKAWAQRYNSTWSEWSPSVKWLNYYEEPLEQRLPLGVSISCVVILIICLSCYFGIIRIKKEWWDQIPNPAHSPLVAIVIQDSQVSLWGKRSRGQEPAKCPRWKTCLTKLLPCFLEHGVDRDEDSSKAARNGPSQGPAKAAWRPVEVSKTILWPESISVVRCVELFEAQVENEEEEEEEDKGSFCPSPENSGGSFQEGREGIAARLTESLFLDLLGDESGAFSPQGMGQSCLLPPLENASAPMPWAEFPRVGSPEASSQGKEQPLNPEPSPQATPTQSLASLAFPELPAVIADNPAYRSFSTFLSQSSDPGELDSDPELAEALEEVEPSLPAAPQPSEPPPTLQPEPETWEQILRQSVLQRRAAPAPASGPSSSGYREFVHAVEQGTQDRRAAGSGPCGEAGYKAFSSLLAGSASCPGTSGLEPSSGESGYKPFQSLPPGCPETPVPTPLFTFGLDMEPPPSPQNPPFPGSSAECPGLEPAVKGEDGQKPPLALEQAADPLRDDLGSGIVYSALTCHLCGHLKQCHGQEDGGKVHVVASPCCSCCCEDGSPPMVTPLRAPDAPSSGVPLEASLSPASLALLGVSREGKIPPCLQITPSNVQSSSQTPTAVAMLSPGPACMDTS.

The first 32 residues, 1 to 32 (MGWLCPGLTFSVSCLILVWAAGSGVTCVSPGG), serve as a signal peptide directing secretion. Over 33–240 (VRVLEWPICL…NYYEEPLEQR (208 aa)) the chain is Extracellular. A disulfide bridge connects residues cysteine 41 and cysteine 51. N-linked (GlcNAc...) asparagine glycans are attached at residues asparagine 60 and asparagine 78. Cysteine 82 and cysteine 94 are joined by a disulfide. N-linked (GlcNAc...) asparagine glycans are attached at residues asparagine 120, asparagine 142, and asparagine 170. The Fibronectin type-III domain maps to 133-232 (APRNLMVHAN…WSPSVKWLNY (100 aa)). Phosphoserine is present on serine 172. 2 N-linked (GlcNAc...) asparagine glycosylation sites follow: asparagine 184 and asparagine 217. Positions 220–224 (WSEWS) match the WSXWS motif motif. The chain crosses the membrane as a helical span at residues 241–264 (LPLGVSISCVVILIICLSCYFGII). Residues 265 to 830 (RIKKEWWDQI…SPGPACMDTS (566 aa)) lie on the Cytoplasmic side of the membrane. The Box 1 motif motif lies at 270–278 (WWDQIPNPA). Acidic residues predominate over residues 378–387 (ENEEEEEEED). Disordered stretches follow at residues 378-403 (ENEEEEEEEDKGSFCPSPENSGGSFQ) and 450-488 (MPWAEFPRVGSPEASSQGKEQPLNPEPSPQATPTQSLAS). The segment at 444-564 (ENASAPMPWA…ETWEQILRQS (121 aa)) is required for IRS1 activation and IL4-induced cell growth. Tyrosine 504 is modified (phosphotyrosine). 2 disordered regions span residues 508 to 610 (STFL…EAGY) and 623 to 696 (CPGT…DGQK). The span at 518–534 (GELDSDPELAEALEEVE) shows a compositional bias: acidic residues. Residues 538–551 (PAAPQPSEPPPTLQ) show a composition bias toward pro residues. The segment at 564 to 662 (SVLQRRAAPA…VPTPLFTFGL (99 aa)) is required for IL4-induced gene expression. The segment covering 570-582 (AAPAPASGPSSSG) has biased composition (low complexity). A phosphotyrosine mark is found at tyrosine 583 and tyrosine 610. Positions 623 to 635 (CPGTSGLEPSSGE) are enriched in polar residues. A Phosphotyrosine modification is found at tyrosine 638. Pro residues-rich tracts occupy residues 646–655 (PGCPETPVPT) and 665–676 (EPPPSPQNPPFP). Positions 716 to 721 (IVYSAL) match the ITIM motif motif. Positions 811–830 (SQTPTAVAMLSPGPACMDTS) are disordered.

It belongs to the type I cytokine receptor family. Type 4 subfamily. The functional IL4 receptor is formed by initial binding of IL4 to IL4R. Subsequent recruitment to the complex of the common gamma chain, in immune cells, creates a type I receptor and, in non-immune cells, of IL13RA1 forms a type II receptor. IL4R can also interact with the IL13/IL13RA1 complex to form a similar type II receptor. Interacts with PIK3C3. Interacts with the SH2-containing phosphatases, PTPN6/SHIP1, PTPN11/SHIP2 and INPP5D/SHIP. Interacts with JAK1 through a Box 1-containing region; inhibited by SOCS5. Interacts with SOCS5; inhibits IL4 signaling. Interacts with JAK3. Interacts with CLM1. Interacts with IL13RA2. On IL4 binding, phosphorylated on C-terminal tyrosine residues.

The protein resides in the membrane. Functionally, receptor for both interleukin 4 and interleukin 13. Couples to the JAK1/2/3-STAT6 pathway. The IL4 response is involved in promoting Th2 differentiation. The IL4/IL13 responses are involved in regulating IgE production and, chemokine and mucus production at sites of allergic inflammation. In certain cell types, can signal through activation of insulin receptor substrates, IRS1/IRS2. This chain is Interleukin-4 receptor subunit alpha (IL4R), found in Sus scrofa (Pig).